A 389-amino-acid polypeptide reads, in one-letter code: Methionyl-tRNA formyltransferase, mitochondrial (389 aa).

The protein belongs to the Fmt family.

Its subcellular location is the mitochondrion. The catalysed reaction is L-methionyl-tRNA(fMet) + (6R)-10-formyltetrahydrofolate = N-formyl-L-methionyl-tRNA(fMet) + (6S)-5,6,7,8-tetrahydrofolate + H(+). In terms of biological role, methionyl-tRNA formyltransferase that formylates methionyl-tRNA in mitochondria and is crucial for translation initiation. This chain is Methionyl-tRNA formyltransferase, mitochondrial (MTFMT), found in Homo sapiens (Human).